We begin with the raw amino-acid sequence, 1198 residues long: MALVQAHRARRLHAEAPDSGDQPPRRRVRQQPTRAAPAPARARRRRAPAPSPGGSGAPPTSGGSPASPLLDASSKDTPAAHRPPRGTVVAPRGCGLLQAIDAATNQPLEIRYHLDLARALTRLCEVNLQELPPDLTPRELQTMDSSHLRDVVIKLRPPRADIWTLGSRGVVVRSTVTPLEQPDGQGQAAEVEDHQPNPPGEGLKFPLCFLVRGRQVNLVQDVQPVHRCQYCARFYKSQHECSARRRDFYFHHINSHSSNWWREIQFFPIGSHPRTERLFVTYDVETYTWMGAFGKQLVPFMLVMKFGGDEPLVTAARDLAANLGWDRWEQDPLTFYCITPEKMAIGRQFRTFRDHLQMLMARDLWSSFVASNPHLADWALSEHGLSSPEELTYEELKKLPSIKGIPRFLELYIVGHNINGFDEIVLAAQVINNRSEVPGPFRITRNFMPRAGKILFNDVTFALPNPRSKKRTDFLLWEQGGCDDTDFKYQYLKVMVRDTFALTHTSLRKAAQAYALPVEKGCCAYQAVNQFYMLGSYRSEADGFPIQEYWKDREEFVLNRELWKKKGQDKYDIIKETLDYCALDVQVTAELVNKLRDSYASFVRDAVGLTDASFNVFQRPTISSNSHAIFRQIVFRAEQPARSNLGPDLLAPSHELYDYVRASIRGGRCYPTYLGILREPLYVYDICGMYASALTHPMPWGPPLNPYERALAARAWQQALDLQGCKIDYFDARLLPGVFTVDADPPDETQLDPLPPFCSRKGGRLCWTNERLRGEVATSVDLVTLHNRGWRVHLVPDERTTVFPEWRCVAREYVQLNIAAKERADRDKNQTLRSIAKLLSNALYGSFATKLDNKKIVFSDQMDAATLKGITAGQVNIKSSSFLETDNLSAEVMPAFQREYSPQQLALADSDAEESEDERAPTPFYSPPSGTPGHVAYTYKPITFLDAEEGDMCLHTLERVDPLVDNDRYPSHLASFVLAWTRAFVSEWSEFLYEEDRGTPLEDRPLKSVYGDTDSLFVTERGHRLMETRGKKRIKKHGGNLVFDPERPELTWLVECETVCGACGADAYSPESVFLAPKLYALKSLHCPSCGASSKGKLRAKGHAAEGLDYDTMVKCYLADAQGEDRQRFSTSRTSLKRTLASAQPGAHPFTVTQTTLTRTLRPWKDMTLARLDEHRLLPYSESRPNPRNEEICWIEMP.

Disordered stretches follow at residues 1–87, 179–199, and 904–930; these read MALV…PRGT, LEQP…PNPP, and QLAL…PPSG. 2 stretches are compositionally biased toward low complexity: residues 30–40 and 57–68; these read QQPTRAAPAPA and APPTSGGSPASP.

The protein belongs to the DNA polymerase type-B family. As to quaternary structure, heterodimer with the terminal protein; this heterodimer binds to bp 9 to 18 of the genome. Forms a complex with viral pTP, DBP and hosts NFIA and POU2F1/OCT1 for initiation of replication.

It is found in the host nucleus. The enzyme catalyses DNA(n) + a 2'-deoxyribonucleoside 5'-triphosphate = DNA(n+1) + diphosphate. In terms of biological role, eukaryotic-type DNA polymerase involved in viral genomic replication. DNA synthesis is protein primed, and acts in a strand displacement replication. Assembles in complex with viral pTP, DBP, host NFIA and host POU2F1/OCT1 on viral origin of replication. The polymerase covalently transfers dCMP onto pTP, thereby initiating complementary strand synthesis. The sequence is that of DNA polymerase from Homo sapiens (Human).